A 179-amino-acid chain; its full sequence is Translation initiation factor IF-3 (179 aa).

The protein belongs to the IF-3 family. Monomer.

It is found in the cytoplasm. Its function is as follows. IF-3 binds to the 30S ribosomal subunit and shifts the equilibrium between 70S ribosomes and their 50S and 30S subunits in favor of the free subunits, thus enhancing the availability of 30S subunits on which protein synthesis initiation begins. This Buchnera aphidicola subsp. Acyrthosiphon pisum (strain 5A) protein is Translation initiation factor IF-3.